The following is a 138-amino-acid chain: Acidic phospholipase A2 BthA-1 (138 aa).

The signal sequence occupies residues 1–16 (MRTLWIMAVLLVGVEG). Intrachain disulfides connect cysteine 42/cysteine 131, cysteine 44/cysteine 60, cysteine 59/cysteine 111, cysteine 65/cysteine 138, cysteine 66/cysteine 104, cysteine 73/cysteine 97, and cysteine 91/cysteine 102. Ca(2+) is bound by residues tyrosine 43, glycine 47, and glycine 48. Residue histidine 63 is part of the active site. Aspartate 64 is a Ca(2+) binding site. Aspartate 105 is an active-site residue.

This sequence belongs to the phospholipase A2 family. Group II subfamily. D49 sub-subfamily. Homodimer; non-covalently linked. Ca(2+) is required as a cofactor. In terms of tissue distribution, expressed by the venom gland.

The protein resides in the secreted. It carries out the reaction a 1,2-diacyl-sn-glycero-3-phosphocholine + H2O = a 1-acyl-sn-glycero-3-phosphocholine + a fatty acid + H(+). Its activity is regulated as follows. Inhibited by EDTA and bromophenacyl bromide (BPB). Functionally, snake venom phospholipase A2 (PLA2) that displays edema-inducing activities (activity that is inhibited by EDTA and dexamethasone), inhibits phospholipid-dependent collagen/ADP-induced platelet aggregation, possess hypotensive as well as anticoagulant activities. In addition, this enzyme shows bactericidal activity against E.coli and S.aureus. PLA2 catalyzes the calcium-dependent hydrolysis of the 2-acyl groups in 3-sn-phosphoglycerides. In Bothrops jararacussu (Jararacussu), this protein is Acidic phospholipase A2 BthA-1.